The chain runs to 338 residues: Queuosine 5'-phosphate N-glycosylase/hydrolase (338 aa).

Methionine 1 carries the post-translational modification N-acetylmethionine. Positions 51, 235, 237, 311, 312, and 316 each coordinate queuine. Aspartate 237 serves as the catalytic Nucleophile or transition state stabilizer.

Belongs to the QNG1 protein family. Highly expressed in liver.

The catalysed reaction is queuosine 5'-phosphate + H2O = queuine + D-ribose 5-phosphate. Its function is as follows. Catalyzes the hydrolysis of queuosine 5'-phosphate, releasing the nucleobase queuine (q). Is required for salvage of queuine from exogenous queuosine (Q) that is imported and then converted to queuosine 5'-phosphate intracellularly. The sequence is that of Queuosine 5'-phosphate N-glycosylase/hydrolase from Mus musculus (Mouse).